A 217-amino-acid chain; its full sequence is Ribulose-phosphate 3-epimerase (217 aa).

Serine 6 is a substrate binding site. A divalent metal cation is bound by residues histidine 29, aspartate 31, and histidine 62. The active-site Proton acceptor is the aspartate 31. Substrate contacts are provided by residues histidine 62, glycine 138–glycine 141, aspartate 171–glycine 173, and glycine 193–serine 194. Aspartate 171 serves as a coordination point for a divalent metal cation. Catalysis depends on aspartate 171, which acts as the Proton donor.

The protein belongs to the ribulose-phosphate 3-epimerase family. A divalent metal cation is required as a cofactor.

It carries out the reaction D-ribulose 5-phosphate = D-xylulose 5-phosphate. Its pathway is carbohydrate degradation. Catalyzes the reversible epimerization of D-ribulose 5-phosphate to D-xylulose 5-phosphate. This is Ribulose-phosphate 3-epimerase from Helicobacter pylori (strain ATCC 700392 / 26695) (Campylobacter pylori).